Reading from the N-terminus, the 433-residue chain is ATP-dependent protease ATPase subunit HslU (433 aa).

ATP-binding positions include V18, 60-65 (GVGKTE), D246, E311, and R383.

This sequence belongs to the ClpX chaperone family. HslU subfamily. As to quaternary structure, a double ring-shaped homohexamer of HslV is capped on each side by a ring-shaped HslU homohexamer. The assembly of the HslU/HslV complex is dependent on binding of ATP.

Its subcellular location is the cytoplasm. Its function is as follows. ATPase subunit of a proteasome-like degradation complex; this subunit has chaperone activity. The binding of ATP and its subsequent hydrolysis by HslU are essential for unfolding of protein substrates subsequently hydrolyzed by HslV. HslU recognizes the N-terminal part of its protein substrates and unfolds these before they are guided to HslV for hydrolysis. This is ATP-dependent protease ATPase subunit HslU from Nitrobacter winogradskyi (strain ATCC 25391 / DSM 10237 / CIP 104748 / NCIMB 11846 / Nb-255).